A 1272-amino-acid polypeptide reads, in one-letter code: RING finger protein PFE0100w (1272 aa).

Residues 216–260 (INKINDVSNNDPKKDNNEKNTSSNNITHNNYNDISNNNNNNNNIN) form a disordered region. Residues 234-260 (KNTSSNNITHNNYNDISNNNNNNNNIN) are compositionally biased toward low complexity. Residues 608–752 (YIQTINYLET…GYKFIKYYPQ (145 aa)) form a CHCR repeat. Residues 771–791 (IFIPLFLDNIDFLFMFIVKFL) traverse the membrane as a helical segment. Disordered regions lie at residues 842-862 (NQNH…NNSQ) and 908-970 (ENQT…IINK). 2 stretches are compositionally biased toward low complexity: residues 850–861 (SDSHNLSDDNNS) and 909–956 (NQTN…IQTN). The span at 957–967 (KQKGNSTTNKI) shows a compositional bias: polar residues. Residues 1146-1182 (MNDMNKNINDKCIEIEKDKKELEKIKKKQLKKKYNFY) adopt a coiled-coil conformation. The segment at 1189–1224 (CSICKEILSVPMIHFLCKHSYHSYCLKDNNVCILCH) adopts an RING-type; atypical zinc-finger fold.

It localises to the membrane. This is RING finger protein PFE0100w from Plasmodium falciparum (isolate 3D7).